Reading from the N-terminus, the 920-residue chain is Zinc finger MIZ domain-containing protein 2 (920 aa).

2 disordered regions span residues 1–22 and 54–79; these read MNSM…GSFA and SQVL…VAGG. Residues 60–79 are compositionally biased toward low complexity; the sequence is PMGPAGSPSGSSMMPGVAGG. Position 111 is an omega-N-methylarginine (Arg111). Disordered stretches follow at residues 243 to 265 and 286 to 391; these read GQRL…RQGV and PSTA…SPNQ. Arg245 and Arg262 each carry asymmetric dimethylarginine. The segment covering 295–304 has biased composition (pro residues); it reads PGQPPAPSPS. Polar residues predominate over residues 334-354; it reads EQFNGQGASFNGGSVSYSQPG. The segment covering 366-379 has biased composition (pro residues); sequence PSSPLPGNPTPPMT. Low complexity predominate over residues 380–389; it reads PSSSVPYMSP. Glycyl lysine isopeptide (Lys-Gly) (interchain with G-Cter in SUMO2) cross-links involve residues Lys402 and Lys457. Residues 435-506 are interaction with AR; it reads PFRLQHNLAV…TIERGDNKTS (72 aa). The SP-RING-type zinc finger occupies 585-671; it reads GEDGVEQTAI…IYIQNSDYEE (87 aa). Zn(2+) contacts are provided by Cys616, His618, Cys639, and Cys642. Lys692 participates in a covalent cross-link: Glycyl lysine isopeptide (Lys-Gly) (interchain with G-Cter in SUMO2). The disordered stretch occupies residues 803–920; the sequence is SQMAPAGHLD…DDLLSLFENN (118 aa). Low complexity predominate over residues 876–890; the sequence is AGEAPEPALDLLPEL. Residues 906–920 are compositionally biased toward polar residues; the sequence is PTNNNDDLLSLFENN.

Interacts with AR, SMARCA4/BRG1 and SMARCE1/BAF57. Interaction with either SMARCA4 and SMARCE1 enhances AR-mediated transcription. As to expression, expressed most abundantly in testis with lower levels in heart, brain, pancreas, prostate and ovary.

The protein localises to the nucleus. Increases ligand-dependent transcriptional activity of AR and other nuclear hormone receptors. The protein is Zinc finger MIZ domain-containing protein 2 (ZMIZ2) of Homo sapiens (Human).